A 546-amino-acid polypeptide reads, in one-letter code: CTP synthase (546 aa).

An amidoligase domain region spans residues 1-266; sequence MTTNYIFVTG…DELVCKRFGI (266 aa). S14 contributes to the CTP binding site. Residue S14 participates in UTP binding. Residues 15 to 20 and D72 contribute to the ATP site; that span reads SLGKGI. Residues D72 and E140 each coordinate Mg(2+). CTP is bound by residues 147 to 149, 187 to 192, and K223; these read DIE and KTKPTQ. Residues 187–192 and K223 each bind UTP; that span reads KTKPTQ. Position 239–241 (239–241) interacts with ATP; the sequence is RDV. The Glutamine amidotransferase type-1 domain maps to 291–542; that stretch reads TIGMVGKYIE…VKAAGEFQRG (252 aa). G352 is an L-glutamine binding site. Catalysis depends on C379, which acts as the Nucleophile; for glutamine hydrolysis. L-glutamine contacts are provided by residues 380–383, E403, and R470; that span reads LGMQ. Residues H515 and E517 contribute to the active site.

Belongs to the CTP synthase family. In terms of assembly, homotetramer.

The catalysed reaction is UTP + L-glutamine + ATP + H2O = CTP + L-glutamate + ADP + phosphate + 2 H(+). It catalyses the reaction L-glutamine + H2O = L-glutamate + NH4(+). It carries out the reaction UTP + NH4(+) + ATP = CTP + ADP + phosphate + 2 H(+). It participates in pyrimidine metabolism; CTP biosynthesis via de novo pathway; CTP from UDP: step 2/2. With respect to regulation, allosterically activated by GTP, when glutamine is the substrate; GTP has no effect on the reaction when ammonia is the substrate. The allosteric effector GTP functions by stabilizing the protein conformation that binds the tetrahedral intermediate(s) formed during glutamine hydrolysis. Inhibited by the product CTP, via allosteric rather than competitive inhibition. Catalyzes the ATP-dependent amination of UTP to CTP with either L-glutamine or ammonia as the source of nitrogen. Regulates intracellular CTP levels through interactions with the four ribonucleotide triphosphates. The sequence is that of CTP synthase from Vibrio atlanticus (strain LGP32) (Vibrio splendidus (strain Mel32)).